Here is an 827-residue protein sequence, read N- to C-terminus: Beta-galactosidase 2 (827 aa).

Residues 1–24 form the signal peptide; it reads MAASAVAVAFVVAVAAVLAAAASA. The Proton donor role is filled by Glu-182. N-linked (GlcNAc...) asparagine glycosylation occurs at Asn-209. Glu-251 serves as the catalytic Nucleophile. Asn-458 is a glycosylation site (N-linked (GlcNAc...) asparagine). In terms of domain architecture, SUEL-type lectin spans 741–827; that stretch reads DYEKAKVHLQ…KRAVVEAICG (87 aa).

This sequence belongs to the glycosyl hydrolase 35 family.

It localises to the secreted. Its subcellular location is the extracellular space. It is found in the apoplast. It carries out the reaction Hydrolysis of terminal non-reducing beta-D-galactose residues in beta-D-galactosides.. This is Beta-galactosidase 2 from Oryza sativa subsp. japonica (Rice).